Here is a 1004-residue protein sequence, read N- to C-terminus: Ephrin type-A receptor 8 (1004 aa).

The first 26 residues, Met1–Ala26, serve as a signal peptide directing secretion. Topologically, residues Gly27–Thr541 are extracellular. In terms of domain architecture, Eph LBD spans Glu30–Arg208. Fibronectin type-III domains are found at residues Pro327–Ala437 and Ala438–Pro533. Asn339, Asn406, and Asn431 each carry an N-linked (GlcNAc...) asparagine glycan. The helical transmembrane segment at Ile542–Cys562 threads the bilayer. The interval Lys563–Tyr569 is mediates interaction with ANKS1A and ANKS1B. Over Lys563–Leu1004 the chain is Cytoplasmic. The segment at Ala588 to Gly643 is mediates interaction with PIK3CG and required for endocytosis. Residue Tyr615 is modified to Phosphotyrosine; by autocatalysis. The 262-residue stretch at Ile634 to Val895 folds into the Protein kinase domain. ATP-binding positions include Ile640–Val648 and Lys666. Asp759 functions as the Proton acceptor in the catalytic mechanism. At Tyr838 the chain carries Phosphotyrosine; by autocatalysis. The SAM domain occupies Asn929 to Gln993. The PDZ-binding motif lies at Arg1002 to Leu1004.

This sequence belongs to the protein kinase superfamily. Tyr protein kinase family. Ephrin receptor subfamily. Heterotetramer upon binding of the ligand. The heterotetramer is composed of an ephrin dimer and a receptor dimer. Oligomerization is probably required to induce biological responses. May also form heterodimers with other ephrin receptors. Interacts with FYN; possible downstream effector of EPHA8 in regulation of cell adhesion. Interacts with PIK3CG; regulates integrin-mediated cell adhesion to substrate. Interacts with TIAM1; regulates clathrin-mediated endocytosis of EPHA8. Interacts with ANKS1A and ANKS1B; EPHA8 kinase activity-independent but stimulated by EPHA8 ubiquitination. Post-translationally, phosphorylated. Phosphorylation is stimulated upon binding of its ligands including EFNA2, EFNA3 and EFNA5. Autophosphorylation on Tyr-615 is critical for association with FYN. Autophosphorylation on Tyr-838 modulates tyrosine kinase activity. Ubiquitinated. Ubiquitination by CBL regulates the receptor stability and activity through proteasomal degradation. ANKS1A prevents ubiquitination and degradation. As to expression, specifically expressed in the central nervous system.

The protein localises to the cell membrane. Its subcellular location is the cell projection. It localises to the early endosome membrane. It catalyses the reaction L-tyrosyl-[protein] + ATP = O-phospho-L-tyrosyl-[protein] + ADP + H(+). Receptor tyrosine kinase which binds promiscuously GPI-anchored ephrin-A family ligands residing on adjacent cells, leading to contact-dependent bidirectional signaling into neighboring cells. The signaling pathway downstream of the receptor is referred to as forward signaling while the signaling pathway downstream of the ephrin ligand is referred to as reverse signaling. The GPI-anchored ephrin-A EFNA2, EFNA3, and EFNA5 are able to activate EPHA8 through phosphorylation. With EFNA5 may regulate integrin-mediated cell adhesion and migration on fibronectin substrate but also neurite outgrowth. During development of the nervous system also plays a role in axon guidance. Downstream effectors of the EPHA8 signaling pathway include FYN which promotes cell adhesion upon activation by EPHA8 and the MAP kinases in the stimulation of neurite outgrowth. The protein is Ephrin type-A receptor 8 (Epha8) of Mus musculus (Mouse).